The primary structure comprises 283 residues: MESFKYCFDNDGKKWIIGNTLYSGNSILYKVRKNFTSSFYNYVMKIDHKSHKPLLSEIRFYISVLDPLTIDNWTRERGIKYLAIPDLYGIGETDDYMFFVIKNLGRVFAPKDTESVFEACVTMINTLEFIHSQGFTHGKIEPRNILIRNKRLSLIDYSRTNKLYKSGNSHIDYNEDMITSGNINYMCVDNHLGATVSRRGDLEMLGYCMIEWFGGKLPWKNESSIKVIKQKKEYKKFIATFFEDCFPEGNEPLELVRYIELVYTLDYSQTPNYDRLRKLFIQD.

Residues methionine 1 and lysine 30 each coordinate ATP. The Protein kinase domain occupies 1–283 (MESFKYCFDN…DRLRKLFIQD (283 aa)).

It belongs to the protein kinase superfamily. Ser/Thr protein kinase family. Poxviruses subfamily. Interacts with B1/VPK1. Interacts with host VRK1. Interacts with host VRK2.

It localises to the host nucleus. Its activity is regulated as follows. Both catalytically active kinases B1/VPK1 and host VRK2 repress B12 inhibitory activity in a B1/VPK1 deletion mutant strain. Its function is as follows. Pseudokinase that plays a role in viral DNA replication repression by activating the antiviral protein BANF1 and inhibiting the activity of host VRK1, a cellular modulator of BANF1. In Vaccinia virus (strain Western Reserve) (VACV), this protein is Pseudokinase OPG198 (OPG198).